Consider the following 225-residue polypeptide: Paired immunoglobulin-like type 2 receptor beta-2 (225 aa).

Positions 1–31 are cleaved as a signal peptide; it reads MALLISLPGETPAMAQILLLLSSACLHAGNS. Topologically, residues 32 to 195 are extracellular; that stretch reads ARSNGGNDFG…NPSLMNLGAM (164 aa). N-linked (GlcNAc...) asparagine glycans are attached at residues Asn90, Asn107, and Asn160. A helical transmembrane segment spans residues 196-216; sequence VTMLLAKVVVIILVYGWMIFL. The Cytoplasmic portion of the chain corresponds to 217–225; the sequence is RWKQRPDPA.

It localises to the membrane. Its function is as follows. Paired receptors consist of highly related activating and inhibitory receptors and are widely involved in the regulation of the immune system. PILRB2 is probably a cellular signaling activating receptor that associates with ITAM-bearing adapter molecules on the cell surface. This Mus musculus (Mouse) protein is Paired immunoglobulin-like type 2 receptor beta-2 (Pilrb2).